The chain runs to 188 residues: dCTP deaminase (188 aa).

Residues 111-116, 135-137, glutamine 156, tyrosine 170, and glutamine 180 each bind dCTP; these read KSTYAR and TLE. Glutamate 137 functions as the Proton donor/acceptor in the catalytic mechanism.

It belongs to the dCTP deaminase family. As to quaternary structure, homotrimer.

The catalysed reaction is dCTP + H2O + H(+) = dUTP + NH4(+). It functions in the pathway pyrimidine metabolism; dUMP biosynthesis; dUMP from dCTP (dUTP route): step 1/2. Catalyzes the deamination of dCTP to dUTP. This is dCTP deaminase from Acidithiobacillus ferrooxidans (strain ATCC 23270 / DSM 14882 / CIP 104768 / NCIMB 8455) (Ferrobacillus ferrooxidans (strain ATCC 23270)).